A 138-amino-acid chain; its full sequence is DNA-directed RNA polymerase subunit omega (138 aa).

A disordered region spans residues 117-138 (NLLGRDNFFSTPENRNTSNTDS). A compositionally biased stretch (polar residues) spans 124 to 138 (FFSTPENRNTSNTDS).

This sequence belongs to the RNA polymerase subunit omega family. As to quaternary structure, the RNAP catalytic core consists of 2 alpha, 1 beta, 1 beta' and 1 omega subunit. When a sigma factor is associated with the core the holoenzyme is formed, which can initiate transcription.

It catalyses the reaction RNA(n) + a ribonucleoside 5'-triphosphate = RNA(n+1) + diphosphate. Functionally, promotes RNA polymerase assembly. Latches the N- and C-terminal regions of the beta' subunit thereby facilitating its interaction with the beta and alpha subunits. This is DNA-directed RNA polymerase subunit omega from Ehrlichia canis (strain Jake).